The following is an 87-amino-acid chain: Toxin ICK-41 (87 aa).

A signal peptide spans 1–19 (MKPIVYMLLFCAFTVVILG). Disulfide bonds link cysteine 40-cysteine 54, cysteine 40-cysteine 77, cysteine 53-cysteine 66, and cysteine 80-cysteine 87.

It belongs to the neurotoxin 27 (Jztx-72) family. ICK-41 subfamily. As to expression, expressed by the venom gland.

It localises to the secreted. Its function is as follows. Probable neurotoxin with ion channel impairing activity. The sequence is that of Toxin ICK-41 from Trittame loki (Brush-footed trapdoor spider).